Here is a 461-residue protein sequence, read N- to C-terminus: Bifunctional protein GlmU (461 aa).

The segment at 1-235 (MTDTRKQRAA…EDDLIGCDSK (235 aa)) is pyrophosphorylase. UDP-N-acetyl-alpha-D-glucosamine is bound by residues 13 to 16 (LAAG), K27, Q80, 85 to 86 (GT), 108 to 110 (YGD), G146, E161, and N176. Residue D110 participates in Mg(2+) binding. Positions 236-256 (ADLAEAEAIFQQKRRRALMEA) are linker. The segment at 257-461 (GVTMVAPETV…ARTTDQNKKG (205 aa)) is N-acetyltransferase. Residues R322 and K340 each contribute to the UDP-N-acetyl-alpha-D-glucosamine site. The Proton acceptor role is filled by H352. UDP-N-acetyl-alpha-D-glucosamine contacts are provided by Y355 and N366. Acetyl-CoA contacts are provided by residues A369, 375 to 376 (NY), S394, S412, and R429.

It in the N-terminal section; belongs to the N-acetylglucosamine-1-phosphate uridyltransferase family. This sequence in the C-terminal section; belongs to the transferase hexapeptide repeat family. In terms of assembly, homotrimer. The cofactor is Mg(2+).

It is found in the cytoplasm. The catalysed reaction is alpha-D-glucosamine 1-phosphate + acetyl-CoA = N-acetyl-alpha-D-glucosamine 1-phosphate + CoA + H(+). It catalyses the reaction N-acetyl-alpha-D-glucosamine 1-phosphate + UTP + H(+) = UDP-N-acetyl-alpha-D-glucosamine + diphosphate. The protein operates within nucleotide-sugar biosynthesis; UDP-N-acetyl-alpha-D-glucosamine biosynthesis; N-acetyl-alpha-D-glucosamine 1-phosphate from alpha-D-glucosamine 6-phosphate (route II): step 2/2. It functions in the pathway nucleotide-sugar biosynthesis; UDP-N-acetyl-alpha-D-glucosamine biosynthesis; UDP-N-acetyl-alpha-D-glucosamine from N-acetyl-alpha-D-glucosamine 1-phosphate: step 1/1. Its pathway is bacterial outer membrane biogenesis; LPS lipid A biosynthesis. Catalyzes the last two sequential reactions in the de novo biosynthetic pathway for UDP-N-acetylglucosamine (UDP-GlcNAc). The C-terminal domain catalyzes the transfer of acetyl group from acetyl coenzyme A to glucosamine-1-phosphate (GlcN-1-P) to produce N-acetylglucosamine-1-phosphate (GlcNAc-1-P), which is converted into UDP-GlcNAc by the transfer of uridine 5-monophosphate (from uridine 5-triphosphate), a reaction catalyzed by the N-terminal domain. In Hyphomonas neptunium (strain ATCC 15444), this protein is Bifunctional protein GlmU.